We begin with the raw amino-acid sequence, 538 residues long: Chaperonin GroEL (538 aa).

Residues 29–32 (TIGP), 86–90 (DGTTT), Gly-413, 476–478 (NAA), and Asp-492 each bind ATP.

The protein belongs to the chaperonin (HSP60) family. In terms of assembly, forms a cylinder of 14 subunits composed of two heptameric rings stacked back-to-back. Interacts with the co-chaperonin GroES.

Its subcellular location is the cytoplasm. It carries out the reaction ATP + H2O + a folded polypeptide = ADP + phosphate + an unfolded polypeptide.. Functionally, together with its co-chaperonin GroES, plays an essential role in assisting protein folding. The GroEL-GroES system forms a nano-cage that allows encapsulation of the non-native substrate proteins and provides a physical environment optimized to promote and accelerate protein folding. The protein is Chaperonin GroEL of Staphylococcus aureus (strain NCTC 8325 / PS 47).